The sequence spans 299 residues: Secreted LysM effector ldpB (299 aa).

An N-terminal signal peptide occupies residues 1–19 (MGLTSILIAQVLFLGAANS). 3 LysM domains span residues 46–91 (WVND…SYCV), 135–182 (AFYK…YVCI), and 211–258 (KYHK…YVCV). An N-linked (GlcNAc...) asparagine glycan is attached at Asn-154. The segment covering 266-283 (ATATPQPTPQPQQSSSPD) has biased composition (low complexity). The disordered stretch occupies residues 266–288 (ATATPQPTPQPQQSSSPDQPMPQ).

Belongs to the secreted LysM effector family.

Its subcellular location is the secreted. The protein localises to the cell wall. It is found in the extracellular space. It localises to the extracellular matrix. Functionally, cell wall chitin of A.fumigatus recruits lung eosinophils during infection and ldpB might have a role in sequestration of chitin and act as triggers of host immunity to dampen host defense. This is Secreted LysM effector ldpB from Aspergillus fumigatus (strain ATCC MYA-4609 / CBS 101355 / FGSC A1100 / Af293) (Neosartorya fumigata).